The sequence spans 330 residues: Flotillin-like protein FloA (330 aa).

2 helical membrane-spanning segments follow: residues 5–25 and 28–48; these read IILP…LFTF and VALW…TLIG.

It belongs to the flotillin-like FloA family. As to quaternary structure, homooligomerizes.

The protein resides in the cell membrane. The protein localises to the membrane raft. Found in functional membrane microdomains (FMM) that may be equivalent to eukaryotic membrane rafts. FMMs are highly dynamic and increase in number as cells age. Flotillins are thought to be important factors in membrane fluidity. The protein is Flotillin-like protein FloA of Oceanobacillus iheyensis (strain DSM 14371 / CIP 107618 / JCM 11309 / KCTC 3954 / HTE831).